Here is a 473-residue protein sequence, read N- to C-terminus: Photosystem II CP43 reaction center protein (473 aa).

Residues 1 to 14 (MKTLYSLRRFYPVE) constitute a propeptide that is removed on maturation. Thr-15 bears the N-acetylthreonine mark. A Phosphothreonine modification is found at Thr-15. 5 helical membrane-spanning segments follow: residues 69 to 93 (LFEV…PHLA), 134 to 155 (LLGP…KDRN), 178 to 200 (KALY…RKIT), 255 to 275 (KPFA…LSYS), and 291 to 312 (WFNN…ASQA). Glu-367 provides a ligand contact to [CaMn4O5] cluster. A helical transmembrane segment spans residues 447–471 (RARAAAAGFEKGIDRDFEPVLSMTP).

This sequence belongs to the PsbB/PsbC family. PsbC subfamily. PSII is composed of 1 copy each of membrane proteins PsbA, PsbB, PsbC, PsbD, PsbE, PsbF, PsbH, PsbI, PsbJ, PsbK, PsbL, PsbM, PsbT, PsbX, PsbY, PsbZ, Psb30/Ycf12, at least 3 peripheral proteins of the oxygen-evolving complex and a large number of cofactors. It forms dimeric complexes. Requires Binds multiple chlorophylls and provides some of the ligands for the Ca-4Mn-5O cluster of the oxygen-evolving complex. It may also provide a ligand for a Cl- that is required for oxygen evolution. PSII binds additional chlorophylls, carotenoids and specific lipids. as cofactor.

The protein localises to the plastid. Its subcellular location is the chloroplast thylakoid membrane. In terms of biological role, one of the components of the core complex of photosystem II (PSII). It binds chlorophyll and helps catalyze the primary light-induced photochemical processes of PSII. PSII is a light-driven water:plastoquinone oxidoreductase, using light energy to abstract electrons from H(2)O, generating O(2) and a proton gradient subsequently used for ATP formation. This Drimys granadensis protein is Photosystem II CP43 reaction center protein.